A 263-amino-acid chain; its full sequence is Endonuclease NucS (263 aa).

Belongs to the NucS endonuclease family.

Its subcellular location is the cytoplasm. Functionally, cleaves both 3' and 5' ssDNA extremities of branched DNA structures. This chain is Endonuclease NucS, found in Methanocaldococcus jannaschii (strain ATCC 43067 / DSM 2661 / JAL-1 / JCM 10045 / NBRC 100440) (Methanococcus jannaschii).